Consider the following 712-residue polypeptide: Secretin OutD (712 aa).

Positions 1–27 are cleaved as a signal peptide; it reads MLGKGIKKSWGWLGLTVLLLGSPCGWA. Positions 28–124 are N0; that stretch reads AEFSASFKGT…LANNEQPGVG (97 aa). The N1 stretch occupies residues 126–190; that stretch reads ELVTRVVPLN…DIVNTVDKTG (65 aa). The segment at 191–264 is N2; sequence DREMITVSLN…MIRQLDRKQV (74 aa). Residues 267–394 form an N3 region; sequence GGTKVIYLKY…DLEQVINQLD (128 aa). The disordered stretch occupies residues 288-342; the sequence is GNGTSGNRNSSSTNSSRPSSTRSSSTLNNSNSSSSGSSSGSGSSSSSSSSSMGFG. The interval 399–651 is secretin; it reads QVLVEAIIAE…LFLRPTIIRD (253 aa). A s domain region spans residues 653–712; sequence QQYQQASISKYNSFNNEQQQQRGQGNSVLDNNTLRLSGGNTYTFRQVQSSISAFYQPEGR.

It belongs to the bacterial secretin family. GSP D subfamily. In terms of assembly, forms a cylindrical channel with 15 subunits.

The protein localises to the cell outer membrane. Its function is as follows. Involved in a type II secretion system (T2SS, formerly general secretion pathway, GSP) for the export of proteins. Required for the translocation of the multiple pectic enzymes. This subunit forms the outer membrane channel. In Dickeya chrysanthemi (Pectobacterium chrysanthemi), this protein is Secretin OutD (outD).